The primary structure comprises 327 residues: Aldo/keto reductase slr0942 (327 aa).

18 to 27 (GEQIPALGLG) is an NADP(+) binding site. The Proton donor role is filled by tyrosine 57. Residue histidine 119 coordinates substrate. Residue 216–280 (SPLGSGDRPA…SVNPERLEQN (65 aa)) coordinates NADP(+).

The protein belongs to the aldo/keto reductase family. In terms of assembly, monomer.

The catalysed reaction is a secondary alcohol + NADP(+) = a ketone + NADPH + H(+). Its activity is regulated as follows. Curcumin non-competitively inhibits the enzyme with respect to furfural. To a lesser extent, enzyme activity is also inhibited by indomethacin, coumarate, coumarin, and alrestatin. Functionally, aldo/keto reductase with broad substrate spectrum. Catalyzes the NADPH-dependent reduction of aldehyde- and ketone-groups of different classes of carbonyl compounds to the corresponding alcohols. Highest enzymatic efficiency is observed with 4-oxonon-2-enal (4-ONE) and 4-hydroxynon-2-enal (4-HNE), that are lipid peroxidation products, and 9,10-phenanthrenequinone (9,10-PQ), a photoproduct of phenanthrene that is one of the most prevalent polycyclic aromatic hydrocarbons in the environment. Is also active on sugar-derived reactive carbonyls such as methylglyoxal (MG), glyoxal and 3-deoxyglucosone (3-DG), and on other lipid-derived carbonyls such as acrolein. May be involved in the detoxification of the toxic lipid peroxidation products 4-ONE and 4-HNE besides many other exo- and endogenic reactive carbonyl compounds (RCs) that may lead to photoinhibition or other cell damages. This chain is Aldo/keto reductase slr0942, found in Synechocystis sp. (strain ATCC 27184 / PCC 6803 / Kazusa).